A 434-amino-acid chain; its full sequence is UDP-N-acetylglucosamine 1-carboxyvinyltransferase (434 aa).

34–35 contributes to the phosphoenolpyruvate binding site; that stretch reads KN. Arg-104 provides a ligand contact to UDP-N-acetyl-alpha-D-glucosamine. The Proton donor role is filled by Cys-128. Cys-128 is subject to 2-(S-cysteinyl)pyruvic acid O-phosphothioketal. Positions 319 and 341 each coordinate UDP-N-acetyl-alpha-D-glucosamine.

Belongs to the EPSP synthase family. MurA subfamily.

It localises to the cytoplasm. The enzyme catalyses phosphoenolpyruvate + UDP-N-acetyl-alpha-D-glucosamine = UDP-N-acetyl-3-O-(1-carboxyvinyl)-alpha-D-glucosamine + phosphate. It functions in the pathway cell wall biogenesis; peptidoglycan biosynthesis. Its function is as follows. Cell wall formation. Adds enolpyruvyl to UDP-N-acetylglucosamine. The polypeptide is UDP-N-acetylglucosamine 1-carboxyvinyltransferase (Prochlorococcus marinus (strain MIT 9313)).